The primary structure comprises 343 residues: F17g-G fimbrial adhesin (343 aa).

The first 22 residues, 1–22 (MTNFYKVCLAVFILVCCNISHA), serve as a signal peptide directing secretion. A receptor-binding lectin domain region spans residues 23 to 199 (AVSFIGSTEN…LNPFTLNDTV (177 aa)). Residues 65-66 (AN), 110-111 (DT), and 138-141 (STQG) contribute to the a carbohydrate site. Cysteines 75 and 132 form a disulfide. The interval 200–343 (TSCRLLTPSA…GISTFTFSYQ (144 aa)) is fimbrillin-binding domain. Positions 287–307 (LKFGPDSPVKGNENQWQLSTG) are disordered. Residues 298–307 (NENQWQLSTG) are compositionally biased toward polar residues.

The protein belongs to the fimbrial protein family.

Its subcellular location is the fimbrium. Functionally, essential fimbrial adhesion factor that mediates binding to N-acetylglucosamine-containing receptors in the host intestinal microvilli, leading to colonization of the intestinal tissue, and diarrhea or septicemia. Also confers adhesiveness to laminin and basement membranes. May be involved in the initiation of polymerization of fimbrillin monomers during fimbrial filament biogenesis. This Escherichia coli protein is F17g-G fimbrial adhesin (f17gG).